The following is a 61-amino-acid chain: Truncated Cytokine response-modifying protein B (61 aa).

In terms of biological role, the protein is truncated in this strain and presumably inactive. It has similarities with variola virus CrmB, but the product is inactivated due to several premature stop codon. This chain is Truncated Cytokine response-modifying protein B, found in Bos taurus (Bovine).